Consider the following 290-residue polypeptide: Putative beta-lactamase HcpC (290 aa).

Positions 1-25 (MLENVKKSLFRVLCLGALCLGGLMA) are cleaved as a signal peptide. 7 TPR repeats span residues 29–62 (PKEL…KENS), 64–98 (CFNL…NYSN), 100–133 (CHLL…LKYA), 134–170 (EGCA…NDGD), 172–205 (CTIL…LKDS), 206–242 (PGCF…ENGG), and 244–278 (CFNL…GAKG). Disulfide bonds link Cys-56–Cys-64, Cys-92–Cys-100, Cys-128–Cys-136, Cys-164–Cys-172, Cys-200–Cys-208, Cys-236–Cys-244, and Cys-272–Cys-280.

This sequence belongs to the hcp beta-lactamase family.

The protein localises to the secreted. The enzyme catalyses a beta-lactam + H2O = a substituted beta-amino acid. Its function is as follows. May hydrolyze 6-aminopenicillinic acid and 7-aminocephalosporanic acid (ACA) derivatives. The sequence is that of Putative beta-lactamase HcpC (hcpC) from Helicobacter pylori (strain J99 / ATCC 700824) (Campylobacter pylori J99).